Consider the following 484-residue polypeptide: Crt homolog 2 (484 aa).

At 1-57 the chain is on the cytoplasmic side; the sequence is MSEEKLPLLSPLNENDIENDYKDENLKSDLDKLSNVKKQSIIQRFKDYLKNSISKQT. The chain crosses the membrane as a helical span at residues 58 to 78; sequence ATVLVYVVLYILSGVINSLLL. At 79–94 the chain is on the vacuolar side; the sequence is KKVMNVFTNYGFFLNQ. A helical transmembrane segment spans residues 95 to 115; it reads LTNYGYVPIFGAIVLYKILFT. The Cytoplasmic segment spans residues 116-128; it reads NDIPKDTRSFPQW. The chain crosses the membrane as a helical span at residues 129 to 149; sequence KFVIMGALDAVTGYFVVIGGI. Residues 150–154 are Vacuolar-facing; that stretch reads KTTGP. Residues 155–175 traverse the membrane as a helical segment; it reads LQQLLNQSVIPFTMLLSFIFL. Topologically, residues 176-178 are cytoplasmic; it reads KER. A helical transmembrane segment spans residues 179 to 199; that stretch reads YSLIQLGGALIIIGGVVVSLI. The Vacuolar portion of the chain corresponds to 200–210; sequence PSLTGGNTSGN. N-linked (GlcNAc...) asparagine glycosylation occurs at Asn-206. Residues 211–231 traverse the membrane as a helical segment; it reads MLFYNFFYLISMIPYAFSNVY. The Cytoplasmic portion of the chain corresponds to 232-244; that stretch reads KAIGFSTVEDMDV. The helical transmembrane segment at 245-265 threads the bilayer; the sequence is WYLQYFDALYQSLVGTVLFPI. Topologically, residues 266 to 328 are vacuolar; that stretch reads NNWLPPPSDM…LGCDNCHGAW (63 aa). N-linked (GlcNAc...) asparagine glycosylation is present at Asn-302. A helical membrane pass occupies residues 329 to 349; the sequence is VVVLIYMAVNVLYNVFILLVL. Topologically, residues 350–355 are cytoplasmic; that stretch reads KHAGAT. The helical transmembrane segment at 356 to 378 threads the bilayer; sequence VFSIANTLRLPLTNIAFSFKFIM. Over 379–382 the chain is Vacuolar; it reads GSDS. The chain crosses the membrane as a helical span at residues 383 to 403; sequence NPFSGLSVAGLCIILLGLGGY. At 404 to 484 the chain is on the cytoplasmic side; sequence RVGSMIKQKK…RNQNSIYGDQ (81 aa).

This sequence belongs to the CRT-like transporter family.

Its subcellular location is the vacuole membrane. Nutrient transporter. Involved in maintaining the osmotic homeostasis of the digestive vacuole. This Dictyostelium discoideum (Social amoeba) protein is Crt homolog 2 (crtp2).